Reading from the N-terminus, the 198-residue chain is NAD(P)H dehydrogenase (quinone) (198 aa).

The 186-residue stretch at 4 to 189 folds into the Flavodoxin-like domain; sequence ILVLYYSMYG…SIARYQGEYV (186 aa). Residues 10–15 and 78–80 contribute to the FMN site; these read SMYGHI and TRF. Position 12 (tyrosine 12) interacts with NAD(+). Tryptophan 98 contacts substrate. Residues 113–118 and histidine 133 each bind FMN; that span reads STGTGG.

This sequence belongs to the WrbA family. Requires FMN as cofactor.

It carries out the reaction a quinone + NADH + H(+) = a quinol + NAD(+). It catalyses the reaction a quinone + NADPH + H(+) = a quinol + NADP(+). The polypeptide is NAD(P)H dehydrogenase (quinone) (Salmonella paratyphi B (strain ATCC BAA-1250 / SPB7)).